We begin with the raw amino-acid sequence, 607 residues long: Terpenoid synthase 29 (607 aa).

Residues D358, D362, N502, T506, and E510 each contribute to the Mg(2+) site. The short motif at 358 to 362 is the DDXXD motif element; that stretch reads DDTYD.

Belongs to the terpene synthase family. Tpsa subfamily. The cofactor is Mg(2+). Requires Mn(2+) as cofactor. In terms of tissue distribution, predominantly expressed in flowers but also in siliques, roots, leaves and stems.

The protein localises to the cytoplasm. The protein operates within secondary metabolite biosynthesis; terpenoid biosynthesis. This chain is Terpenoid synthase 29 (TPS29), found in Arabidopsis thaliana (Mouse-ear cress).